A 523-amino-acid chain; its full sequence is Sensory neuron membrane protein 1 (523 aa).

At 1–11 the chain is on the cytoplasmic side; it reads MQLPRELKYAA. A helical membrane pass occupies residues 12 to 32; that stretch reads IAGGVALFGLIFGWVLFPTIL. The Extracellular segment spans residues 33-458; sequence KSQLKKEMAL…HQLFIPKRVV (426 aa). Residues Asn-67 and Asn-229 are each glycosylated (N-linked (GlcNAc...) asparagine). Cystine bridges form between Cys-268–Cys-333, Cys-297–Cys-352, and Cys-335–Cys-341. N-linked (GlcNAc...) asparagine glycosylation occurs at Asn-440. A helical transmembrane segment spans residues 459-479; it reads GVLRWWMVSFGSLGAVIGIVF. The Cytoplasmic portion of the chain corresponds to 480–523; the sequence is HFRDHIMRLAVSGDTKVSKVTPEEEEQKDISVIGQAQEPAKVNI.

This sequence belongs to the CD36 family.

Its subcellular location is the cell membrane. Its function is as follows. Plays an olfactory role that is not restricted to pheromone sensitivity. The sequence is that of Sensory neuron membrane protein 1 from Helicoverpa armigera (Cotton bollworm).